A 460-amino-acid chain; its full sequence is Interleukin-6 receptor subunit alpha (460 aa).

A signal peptide spans 1–19 (MLTVGCTLLVALLAAPAVA). The region spanning 20–116 (LVLGSCRALE…DVPPEEPKLS (97 aa)) is the Ig-like C2-type domain. Topologically, residues 20 to 364 (LVLGSCRALE…VQESSSMSLP (345 aa)) are extracellular. 4 disulfide bridges follow: Cys-25-Cys-190, Cys-47-Cys-92, Cys-117-Cys-128, and Cys-162-Cys-173. N-linked (GlcNAc...) asparagine glycans are attached at residues Asn-32 and Asn-55. Fibronectin type-III domains are found at residues 109-214 (PPEE…VQPD) and 215-313 (PPAN…TPWI). An N-linked (GlcNAc...) asparagine glycan is attached at Asn-150. An N-linked (GlcNAc...) asparagine glycan is attached at Asn-218. Residues 300 to 304 (WSEWS) carry the WSXWS motif motif. A helical transmembrane segment spans residues 365–385 (TFLVAGGSLAFGLLLCVFIIL). Residues 386–460 (RLKQKWKSEA…NSNRDYLFPR (75 aa)) are Cytoplasmic-facing.

This sequence belongs to the type I cytokine receptor family. Type 3 subfamily. Component of a hexamer of two molecules each of IL6, IL6R and IL6ST; first binds to IL6 to associate with the signaling subunit IL6ST. Interacts (via N-terminal ectodomain) with SORL1; this interaction may affect IL6-binding to IL6R, hence decrease IL6 'classic-signaling'. In terms of assembly, also interacts with SORL1; this interaction leads to soluble IL6R internalization. May form a trimeric complex with the soluble SORL1 ectodomain and circulating IL6 receptor; this interaction might stabilize circulating IL6, hence promote IL6 'trans-signaling'. A short soluble form is also released from the membrane by proteolysis. The sIL6R is formed by limited proteolysis of membrane-bound receptors, a process referred to as ectodomain shedding. mIL6R is cleaved by the proteases ADAM10 and ADAM17. In terms of processing, glycosylated. Glycosylation is dispensable for transport, signaling, and cell-surface turnover. Glycosylation at Asn-55 is a protease-regulatory exosite. Glycosylation is required for ADAM17-mediated proteolysis. As to expression, expressed by dendritic cells. Detected in the cerebrospinal fluid.

The protein localises to the cell membrane. It is found in the secreted. Its activity is regulated as follows. Classic and trans-signaling are both inhibited by tocilizumab, a humanized monoclonal antibody that blocks interleukin IL6R signaling. In terms of biological role, part of the receptor for interleukin 6. Binds to IL6 with low affinity, but does not transduce a signal. Signal activation necessitate an association with IL6ST. Activation leads to the regulation of the immune response, acute-phase reactions and hematopoiesis. The interaction with membrane-bound IL6R and IL6ST stimulates 'classic signaling', the restricted expression of the IL6R limits classic IL6 signaling to only a few tissues such as the liver and some cells of the immune system. Whereas the binding of IL6 and soluble IL6R to IL6ST stimulates 'trans-signaling'. Alternatively, 'cluster signaling' occurs when membrane-bound IL6:IL6R complexes on transmitter cells activate IL6ST receptors on neighboring receiver cells. Its function is as follows. Signaling via the membrane-bound IL6R is mostly regenerative and anti-inflammatory. Drives naive CD4(+) T cells to the Th17 lineage, through 'cluster signaling' by dendritic cells. Soluble form of IL6 receptor (sIL6R) that acts as an agonist of IL6 activity. The IL6:sIL6R complex (hyper-IL6) binds to IL6ST/gp130 on cell surfaces and induces signaling also on cells that do not express membrane-bound IL6R in a process called IL6 'trans-signaling'. sIL6R is causative for the pro-inflammatory properties of IL6 and an important player in the development of chronic inflammatory diseases. In complex with IL6, is required for induction of VEGF production. Plays a protective role during liver injury, being required for maintenance of tissue regeneration. 'Trans-signaling' in central nervous system regulates energy and glucose homeostasis. This is Interleukin-6 receptor subunit alpha from Mus musculus (Mouse).